A 282-amino-acid chain; its full sequence is 4-diphosphocytidyl-2-C-methyl-D-erythritol kinase (282 aa).

Lysine 12 is a catalytic residue. Residue proline 95–serine 105 coordinates ATP. Residue aspartate 137 is part of the active site.

The protein belongs to the GHMP kinase family. IspE subfamily.

The enzyme catalyses 4-CDP-2-C-methyl-D-erythritol + ATP = 4-CDP-2-C-methyl-D-erythritol 2-phosphate + ADP + H(+). It functions in the pathway isoprenoid biosynthesis; isopentenyl diphosphate biosynthesis via DXP pathway; isopentenyl diphosphate from 1-deoxy-D-xylulose 5-phosphate: step 3/6. Functionally, catalyzes the phosphorylation of the position 2 hydroxy group of 4-diphosphocytidyl-2C-methyl-D-erythritol. In Pseudomonas aeruginosa (strain UCBPP-PA14), this protein is 4-diphosphocytidyl-2-C-methyl-D-erythritol kinase.